We begin with the raw amino-acid sequence, 101 residues long: A-type ATP synthase subunit K (101 aa).

3 consecutive transmembrane segments (helical) span residues 5–25 (WLPF…AQAP), 37–57 (IGAG…VGMA), and 75–95 (ILIF…FAVL).

This sequence belongs to the V-ATPase proteolipid subunit family. As to quaternary structure, has multiple subunits with at least A(3), B(3), C, D, E, F, H, I and proteolipid K(x). The N-terminus is blocked.

It is found in the cell membrane. Its function is as follows. Component of the A-type ATP synthase that produces ATP from ADP in the presence of a proton gradient across the membrane. The chain is A-type ATP synthase subunit K from Sulfurisphaera tokodaii (strain DSM 16993 / JCM 10545 / NBRC 100140 / 7) (Sulfolobus tokodaii).